We begin with the raw amino-acid sequence, 294 residues long: Formate dehydrogenase, nitrate-inducible, iron-sulfur subunit (294 aa).

Over 1–256 (MAMETQDIIK…DTSVSLWKGA (256 aa)) the chain is Periplasmic. 4 4Fe-4S ferredoxin-type domains span residues 30 to 58 (VAKLIDVSTCIGCKACQVACSEWNDIRDE), 91 to 123 (LEWLIRKDGCMHCEDPGCLKACPSAGAIIQYAN), 124 to 153 (GIVDFQSENCIGCGYCIAGCPFNIPRLNKE), and 158 to 189 (YKCTLCVDRVSVGQEPACVKTCPTGAIHFGTK). [4Fe-4S] cluster-binding residues include Cys-39, Cys-42, Cys-45, Cys-49, Cys-100, Cys-103, Cys-108, Cys-112, Cys-133, Cys-136, Cys-139, Cys-143, Cys-160, Cys-163, Cys-175, and Cys-179. Residues 257-279 (LKPLAAAGFIATFAGLIFHYIGI) form a helical membrane-spanning segment. At 280–294 (GPNKEVDDDEEDHHE) the chain is on the cytoplasmic side.

As to quaternary structure, trimer of heterotrimers, consisting of subunits alpha, beta and gamma. The cofactor is [4Fe-4S] cluster.

Its subcellular location is the cell inner membrane. Functionally, formate dehydrogenase allows E.coli to use formate as major electron donor during anaerobic respiration, when nitrate is used as electron acceptor. The beta subunit FdnH is an electron transfer unit containing 4 iron-sulfur clusters; it serves as a conduit for electrons that are transferred from the formate oxidation site in the alpha subunit (FdnG) to the menaquinone associated with the gamma subunit (FdnI) of formate dehydrogenase-N. Formate dehydrogenase-N is part of a system that generates proton motive force, together with the dissimilatory nitrate reductase (Nar). The protein is Formate dehydrogenase, nitrate-inducible, iron-sulfur subunit (fdnH) of Escherichia coli (strain K12).